The chain runs to 423 residues: Hemoglobinase (423 aa).

The signal sequence occupies residues 1-18 (MFYSIFFIHILRIVLVDC). A propeptide spanning residues 19–29 (NEYSEENVDDR) is cleaved from the precursor. Active-site residues include H145 and C186. A disordered region spans residues 286–307 (RKKASTEHDEPPMKPKDSIPSR). Positions 286-423 (RKKASTEHDE…INGVIRKVCG (138 aa)) are excised as a propeptide. Basic and acidic residues predominate over residues 289–305 (ASTEHDEPPMKPKDSIP).

It belongs to the peptidase C13 family. In terms of tissue distribution, gut.

It carries out the reaction Hydrolysis of proteins and small molecule substrates at -Asn-|-Xaa- bonds.. In terms of biological role, this protease is used by the parasite for degradation of the host globin. This chain is Hemoglobinase (HAEM), found in Schistosoma japonicum (Blood fluke).